The primary structure comprises 365 residues: Membrane-bound lytic murein transglycosylase C (365 aa).

The first 19 residues, M1–A19, serve as a signal peptide directing secretion. C20 is lipidated: N-palmitoyl cysteine. A lipid anchor (S-diacylglycerol cysteine) is attached at C20.

It belongs to the transglycosylase Slt family.

The protein localises to the cell outer membrane. The enzyme catalyses Exolytic cleavage of the (1-&gt;4)-beta-glycosidic linkage between N-acetylmuramic acid (MurNAc) and N-acetylglucosamine (GlcNAc) residues in peptidoglycan, from either the reducing or the non-reducing ends of the peptidoglycan chains, with concomitant formation of a 1,6-anhydrobond in the MurNAc residue.. Its function is as follows. Murein-degrading enzyme. May play a role in recycling of muropeptides during cell elongation and/or cell division. The polypeptide is Membrane-bound lytic murein transglycosylase C (Actinobacillus pleuropneumoniae serotype 5b (strain L20)).